A 438-amino-acid polypeptide reads, in one-letter code: UDP-N-acetylmuramoylalanine--D-glutamate ligase (438 aa).

112–118 (GSNGKST) is an ATP binding site.

Belongs to the MurCDEF family.

The protein localises to the cytoplasm. It catalyses the reaction UDP-N-acetyl-alpha-D-muramoyl-L-alanine + D-glutamate + ATP = UDP-N-acetyl-alpha-D-muramoyl-L-alanyl-D-glutamate + ADP + phosphate + H(+). It functions in the pathway cell wall biogenesis; peptidoglycan biosynthesis. Cell wall formation. Catalyzes the addition of glutamate to the nucleotide precursor UDP-N-acetylmuramoyl-L-alanine (UMA). In Salmonella typhimurium (strain LT2 / SGSC1412 / ATCC 700720), this protein is UDP-N-acetylmuramoylalanine--D-glutamate ligase.